The chain runs to 722 residues: Catalase B (722 aa).

The signal sequence occupies residues 1 to 15 (MRALGLVGLVGVANA). Active-site residues include histidine 100 and asparagine 173. Tyrosine 388 is a binding site for heme.

The protein belongs to the catalase family. Heme serves as cofactor.

The protein localises to the secreted. The catalysed reaction is 2 H2O2 = O2 + 2 H2O. Occurs in almost all aerobically respiring organisms and serves to protect cells from the toxic effects of hydrogen peroxide. This chain is Catalase B (catB), found in Emericella nidulans (strain FGSC A4 / ATCC 38163 / CBS 112.46 / NRRL 194 / M139) (Aspergillus nidulans).